The primary structure comprises 406 residues: MTVSTESNFPHGASTQKPQSAEPEIYSSLTKSLDFSNDAEEKWWTRTAPLLSRILDSAGYTLPQQCQFLTLFNTLMIPNFGPHPHIWHSSITHSGLPVEFSVNYQPGKQPTVRIGFEPASSISGTARDPYNMVTVLNVLNKMSRLNFKGFDPSLFHTLISSLALSKNESDLLQGAKLEGSKFKTQAAFGLDLKGDAVTVKTYLYPALKCKVSGLAFSELLEAALAKHQNAHDFSRVLPLVQSYMEEGQCYNQYSFVGFDCVDSSKSRLKIYGALLDISWKKVEEVWTLGARLVNSETNKEGLRYMRALWEYLTPGKERRPVGIWNYELLPGSEEPMPKFYVDMNGENDFQNALGITKFLHHIGLTTTAEGLISKIQEYLYGVPHYPLSQTHVLFANQGPMQPRCEP.

The segment covering 1-19 (MTVSTESNFPHGASTQKPQ) has biased composition (polar residues). The disordered stretch occupies residues 1–23 (MTVSTESNFPHGASTQKPQSAEP). E99 lines the brevianamide F pocket. Dimethylallyl diphosphate-binding residues include R113, K200, and Y202. Y204 is a binding site for brevianamide F. K269, Y271, and Y340 together coordinate dimethylallyl diphosphate.

It belongs to the tryptophan dimethylallyltransferase family.

It functions in the pathway alkaloid biosynthesis. Prenyltransferase; part of the gene cluster that mediates the biosynthesis of paraherquamide, a fungal indole alkaloid that belongs to a family of natural products containing a characteristic bicyclo[2.2.2]diazaoctane core. The first steps in the biosynthesis of paraherquamide is the production of the beta-methyl-proline precursor from L-isoleucine. They require oxidation of a terminally hydroxylated L-isoleucine to the corresponding aldehyde by enzymes which have still to be identified. Spontaneous cyclization and dehydration would yield the 4-methyl pyrolline-5-carboxylic acid, which is then reduced by the pyrroline-5-carboxylate reductase phqD leading to the beta-methyl-proline precursor. The next step of paraherquamide biosynthesis involves coupling of beta-methyl-proline and L-tryptophan by the bimodular NRPS phqB, to produce a monooxopiperazine intermediate. The reductase (R) domain of phqB utilizes NADPH for hydride transfer to reduce the thioester bond of the T domain-tethered linear dipeptide to a hemithioaminal intermediate, which spontaneously cleaves the C-S bond to release the aldehyde product. This compound undergoes spontaneous cyclization and dehydration to give a dienamine which is reverse prenylated at C-2 by the reverse prenyltransferase phqJ. The other prenyltransferase present in the cluster, phqI may be a redundant gene in the pathway. During biosynthetic assembly, the key step to produce the polycyclic core is catalyzed by the bifunctional reductase and intramolecular [4+2] Diels-Alderase, phqE, resulting in formation of the [2.2.2] diazaoctane intermediate preparaherquamide. Following formation of preparaherquamide, an indole 2,3-epoxidation-initiated pinacol-like rearrangement is catalyzed by the phqK FAD-dependent monooxygenase. The prenyltransferase phqA, the cytochrome P450 monooxygenase phqL, and the FAD-linked oxidoreductase phqH (or the cytochrome P450 monooxygenase phqM), are proposed to be involved in the formation of the pyran ring. The FAD-dependent monooxygenase phqK is likely responsible for generation of the spiro-oxindole, and the N-methylation is likely mediated by the phqN methyltransferase leading to the isolable natural product paraherquamide F. However, the order of these biosynthetic steps has still to be determined. In late-stage paraherquamide biosynthesis, the third P450 monooxygenase, phqO, is probably responsible for the C-14 hydroxylation, transforming paraherquamide F to paraherquamide G, and paraherquamide E to the final product paraherquamide A. The expansion from the 6-membered ring pyran (in paraherquamides F and G) to the 7-membered dioxepin ring (in paraherquamides A and E) represents a poorly understood but intriguing process that probably involves the 2-oxoglutarate-dependent dioxygenase phqC. Finally, the remaining members of the paraherquamide cluster, including phqI as well as phqM (or phqH), do not have a clearly prescribed role and appear to be redundant. This chain is Prenyltransferase phqJ, found in Penicillium fellutanum.